A 122-amino-acid polypeptide reads, in one-letter code: Small ribosomal subunit protein uS13 (122 aa).

The segment at 95 to 122 (GLPVRGQRTHTNARTRKGKAKPIAGKKK) is disordered.

The protein belongs to the universal ribosomal protein uS13 family. As to quaternary structure, part of the 30S ribosomal subunit. Forms a loose heterodimer with protein S19. Forms two bridges to the 50S subunit in the 70S ribosome.

In terms of biological role, located at the top of the head of the 30S subunit, it contacts several helices of the 16S rRNA. In the 70S ribosome it contacts the 23S rRNA (bridge B1a) and protein L5 of the 50S subunit (bridge B1b), connecting the 2 subunits; these bridges are implicated in subunit movement. Contacts the tRNAs in the A and P-sites. This Sphingopyxis alaskensis (strain DSM 13593 / LMG 18877 / RB2256) (Sphingomonas alaskensis) protein is Small ribosomal subunit protein uS13.